The following is a 316-amino-acid chain: Olfactory receptor class A-like protein 1 (316 aa).

Residues 1–8 (MDLCVTIK) are Extracellular-facing. The chain crosses the membrane as a helical span at residues 9 to 29 (GVSFLLQAGLGILANALVLLA). Residues 30–39 (YAHIRLAEAR) lie on the Cytoplasmic side of the membrane. A helical membrane pass occupies residues 40–60 (LQPVDAILCHLALVDLLLLLT). Topologically, residues 61–97 (RGVPQTMTVFGMRNLLDDTGCKVVIYTYRIARALSVC) are extracellular. Cysteine 81 and cysteine 169 are joined by a disulfide. Residues 98 to 118 (ITCMLSVFQAVTVAPAAGPLL) traverse the membrane as a helical segment. Residues 119 to 132 (SGVKARLPQLLAPT) lie on the Cytoplasmic side of the membrane. A helical membrane pass occupies residues 133–153 (FAALWFINMAVCIAAPFFSVA). Residues 154–187 (PRNGTVPPFTLNLGFCHVDFHDNLSYVLNGVAVS) lie on the Extracellular side of the membrane. N-linked (GlcNAc...) asparagine glycosylation is found at asparagine 156 and asparagine 176. A helical membrane pass occupies residues 188–208 (VRDFAFVGAMLASSGFILLLL). The Cytoplasmic portion of the chain corresponds to 209 to 233 (HRHRRQVRAVRRSQGSTMETRAART). The chain crosses the membrane as a helical span at residues 234-254 (VLMLVILYSVFFGIDNVIWIY). The Extracellular portion of the chain corresponds to 255 to 264 (MLTVAQVPPV). Residues 265–285 (VADMRVFFSSCYASLSPFLII) traverse the membrane as a helical segment. The Cytoplasmic portion of the chain corresponds to 286-316 (SSNRKLKARMVCATSEQERQAEDGKNSSGKN).

The protein belongs to the G-protein coupled receptor 1 family. In terms of tissue distribution, highly expressed in the olfactory rosette where it localizes to a subset of olfactory sensory neurons, mainly in the apical region of the neuroepithelium. Not detected in other tissues tested.

It is found in the cell membrane. Its function is as follows. Probable pheromone receptor. Shows high specificity for 4-hydroxyphenylacetic acid. Activation of the receptor stimulates intracellular calcium release. In Danio rerio (Zebrafish), this protein is Olfactory receptor class A-like protein 1.